Consider the following 550-residue polypeptide: Calcyphosin-2 (550 aa).

Disordered stretches follow at residues 1–20 and 175–198; these read MVPPLDLGSLVDSDEEDNFS and ISDPEQDLNTKNQESSRVPPDSER. Polar residues predominate over residues 181-190; the sequence is DLNTKNQESS. 3 consecutive EF-hand domains span residues 379–414, 415–452, and 453–488; these read RILTGLGRYFQGLDKEGNGLLEKADFQQALKTFHLE, VSEQDFESFWLILQGYGHSKNKVDYGEFKRAIFGEMNE, and YRKSFVRKAFMQLDFNKTGIVSVIDIRKCYCAKKHP. Positions 466, 468, 470, and 477 each coordinate Ca(2+).

The chain is Calcyphosin-2 (Caps2) from Mus musculus (Mouse).